The following is a 154-amino-acid chain: TSET complex member tstD (154 aa).

This sequence belongs to the adaptor complexes small subunit family. As to quaternary structure, component of the TSET complex, a heterohexamer composed of tstA, tstB, tstC, tstD, tstE and tstF, which may act in plasma membrane turnover. tstA, tstB, tstC and tstD are likely to be the core complex members with tstE and tstF acting as associated scaffold proteins.

The protein resides in the cell membrane. It is found in the cytoplasm. The chain is TSET complex member tstD from Dictyostelium discoideum (Social amoeba).